We begin with the raw amino-acid sequence, 270 residues long: Beta carbonic anhydrase 1 (270 aa).

C39, D41, H105, and C108 together coordinate Zn(2+).

It belongs to the beta-class carbonic anhydrase family. As to quaternary structure, oligomer. Zn(2+) is required as a cofactor.

It carries out the reaction hydrogencarbonate + H(+) = CO2 + H2O. Reversible hydration of carbon dioxide. This chain is Beta carbonic anhydrase 1 (bca-1), found in Caenorhabditis elegans.